A 572-amino-acid chain; its full sequence is Proline--tRNA ligase (572 aa).

This sequence belongs to the class-II aminoacyl-tRNA synthetase family. ProS type 1 subfamily. In terms of assembly, homodimer.

The protein resides in the cytoplasm. It catalyses the reaction tRNA(Pro) + L-proline + ATP = L-prolyl-tRNA(Pro) + AMP + diphosphate. Functionally, catalyzes the attachment of proline to tRNA(Pro) in a two-step reaction: proline is first activated by ATP to form Pro-AMP and then transferred to the acceptor end of tRNA(Pro). As ProRS can inadvertently accommodate and process non-cognate amino acids such as alanine and cysteine, to avoid such errors it has two additional distinct editing activities against alanine. One activity is designated as 'pretransfer' editing and involves the tRNA(Pro)-independent hydrolysis of activated Ala-AMP. The other activity is designated 'posttransfer' editing and involves deacylation of mischarged Ala-tRNA(Pro). The misacylated Cys-tRNA(Pro) is not edited by ProRS. The chain is Proline--tRNA ligase from Citrobacter koseri (strain ATCC BAA-895 / CDC 4225-83 / SGSC4696).